The sequence spans 582 residues: Aspartate--tRNA ligase (582 aa).

Glu174 contacts L-aspartate. The aspartate stretch occupies residues 198–201 (QITK). Arg220 contacts L-aspartate. ATP contacts are provided by residues 220-222 (RDE) and Gln229. An L-aspartate-binding site is contributed by His443. Glu477 is a binding site for ATP. Arg484 is a binding site for L-aspartate. Residue 529-532 (GLDR) coordinates ATP.

It belongs to the class-II aminoacyl-tRNA synthetase family. Type 1 subfamily. In terms of assembly, homodimer.

The protein resides in the cytoplasm. It carries out the reaction tRNA(Asp) + L-aspartate + ATP = L-aspartyl-tRNA(Asp) + AMP + diphosphate. Its function is as follows. Catalyzes the attachment of L-aspartate to tRNA(Asp) in a two-step reaction: L-aspartate is first activated by ATP to form Asp-AMP and then transferred to the acceptor end of tRNA(Asp). In Streptococcus pyogenes serotype M18 (strain MGAS8232), this protein is Aspartate--tRNA ligase.